The sequence spans 490 residues: Delta(14)-sterol reductase (490 aa).

7 helical membrane-spanning segments follow: residues 23-43 (FGGP…VHVF), 80-100 (VFGL…ALSL), 136-156 (LAIL…WTFI), 160-180 (FAQI…FVYV), 230-250 (EFME…AFIA), 255-275 (LYGY…FYVF), and 324-344 (QLGA…YSIF). NADP(+)-binding positions include K351, R355, I378, W383, and 390–391 (NY). The chain crosses the membrane as a helical span at residues 436 to 456 (ARGWGIVFTYFYILYFAILLI). Residues D462, 466–470 (CSKKY), and Y477 contribute to the NADP(+) site.

This sequence belongs to the ERG4/ERG24 family.

The protein resides in the membrane. It catalyses the reaction 4,4-dimethyl-5alpha-cholesta-8,24-dien-3beta-ol + NADP(+) = 4,4-dimethyl-5alpha-cholesta-8,14,24-trien-3beta-ol + NADPH + H(+). It functions in the pathway steroid biosynthesis; zymosterol biosynthesis; zymosterol from lanosterol: step 2/6. Functionally, reduces the C14=C15 double bond of 4,4-dimethyl-cholesta-8,14,24-trienol to produce 4,4-dimethyl-cholesta-8,24-dienol. This Neurospora crassa (strain ATCC 24698 / 74-OR23-1A / CBS 708.71 / DSM 1257 / FGSC 987) protein is Delta(14)-sterol reductase (erg-3).